The primary structure comprises 502 residues: MRSPPGAVAALASVAAQLATAALVPRDAAAPTTAAMPLPFPAQVGIDDSNLATCANANWPPPSSPVGEVISAQLPDADLQAALGEVDPARIRAIVDKLVGFGTRHTLSTQTDPTRGIGAARDWIAEEMRGYAATAGGRMEVTVPGYVQGVASRISFPVKISNVVATLKGDKDPDRVYVVSGHYDSRVTDVMNYEADAPGANDDASGVALAMELARIFATRRPAATIVFTAVAGEEQGLYGSAFMAQTYRNASVNVEGVLNNDIIGSSTGSRGEKDPHTVRVFCQGGSPAGESKERAETRASIGGENDSPARELGRFIAEVGGNAFTDMKVALVYRLDRYLRGGDHRSFLDAGYGSAVRFTEPNEDFNHQHQDVRNATDGTVLGDLAEFVDYDYVARVAKVNLAAAWSLANAPPQVRNVTVDTSTLSNDSGLSWAKIAGAGAALVKGYEVVWRPTTASLWTHQLYVGDVASFRVPLTKDNVIFGVRSVGLNGYKSPATMPFPG.

Positions 1–21 (MRSPPGAVAALASVAAQLATA) are cleaved as a signal peptide. Zn(2+)-binding residues include His182, Asp202, and Glu235. A glycan (N-linked (GlcNAc...) asparagine) is linked at Asn250. Residue Asp262 coordinates Zn(2+). The interval 284-307 (QGGSPAGESKERAETRASIGGEND) is disordered. N-linked (GlcNAc...) asparagine glycans are attached at residues Asn375, Asn417, and Asn427. The region spanning 414–502 (QVRNVTVDTS…KSPATMPFPG (89 aa)) is the Fibronectin type-III domain.

The protein belongs to the peptidase M28 family. M28B subfamily. Requires Zn(2+) as cofactor.

The protein resides in the secreted. This Pyricularia oryzae (strain 70-15 / ATCC MYA-4617 / FGSC 8958) (Rice blast fungus) protein is Probable zinc metalloprotease MGG_02107.